Here is a 456-residue protein sequence, read N- to C-terminus: tRNA-2-methylthio-N(6)-dimethylallyladenosine synthase (456 aa).

In terms of domain architecture, MTTase N-terminal spans 3 to 120; sequence KKVYVKTFGC…LPQMIDQRRA (118 aa). 6 residues coordinate [4Fe-4S] cluster: C12, C49, C83, C157, C161, and C164. The region spanning 143–377 is the Radical SAM core domain; sequence RIDGPSAFVS…QATIEENVQR (235 aa). A TRAM domain is found at 380–447; it reads QAMVGKVERI…PHSLRGELVM (68 aa).

The protein belongs to the methylthiotransferase family. MiaB subfamily. As to quaternary structure, monomer. The cofactor is [4Fe-4S] cluster.

The protein resides in the cytoplasm. The enzyme catalyses N(6)-dimethylallyladenosine(37) in tRNA + (sulfur carrier)-SH + AH2 + 2 S-adenosyl-L-methionine = 2-methylsulfanyl-N(6)-dimethylallyladenosine(37) in tRNA + (sulfur carrier)-H + 5'-deoxyadenosine + L-methionine + A + S-adenosyl-L-homocysteine + 2 H(+). Its function is as follows. Catalyzes the methylthiolation of N6-(dimethylallyl)adenosine (i(6)A), leading to the formation of 2-methylthio-N6-(dimethylallyl)adenosine (ms(2)i(6)A) at position 37 in tRNAs that read codons beginning with uridine. The polypeptide is tRNA-2-methylthio-N(6)-dimethylallyladenosine synthase (Paraburkholderia phymatum (strain DSM 17167 / CIP 108236 / LMG 21445 / STM815) (Burkholderia phymatum)).